The sequence spans 423 residues: Glucose-1-phosphate adenylyltransferase (423 aa).

Alpha-D-glucose 1-phosphate is bound by residues Y100, G165, E180–K181, and S191.

This sequence belongs to the bacterial/plant glucose-1-phosphate adenylyltransferase family. Homotetramer.

The catalysed reaction is alpha-D-glucose 1-phosphate + ATP + H(+) = ADP-alpha-D-glucose + diphosphate. The protein operates within glycan biosynthesis; glycogen biosynthesis. Involved in the biosynthesis of ADP-glucose, a building block required for the elongation reactions to produce glycogen. Catalyzes the reaction between ATP and alpha-D-glucose 1-phosphate (G1P) to produce pyrophosphate and ADP-Glc. This chain is Glucose-1-phosphate adenylyltransferase, found in Lachnospira eligens (strain ATCC 27750 / DSM 3376 / VPI C15-48 / C15-B4) (Eubacterium eligens).